Reading from the N-terminus, the 71-residue chain is 8.6 kDa protein (71 aa).

This Pseudomonas phage Pf1 (Bacteriophage Pf1) protein is 8.6 kDa protein.